A 393-amino-acid polypeptide reads, in one-letter code: SET domain-containing protein DDB_G0283443 (393 aa).

Residues 17-312 (KKIEINETLE…KGDELSISYI (296 aa)) enclose the SET domain.

This sequence belongs to the class V-like SAM-binding methyltransferase superfamily.

Functionally, probable methyltransferase. This Dictyostelium discoideum (Social amoeba) protein is SET domain-containing protein DDB_G0283443.